A 1055-amino-acid chain; its full sequence is cAMP and cAMP-inhibited cGMP 3',5'-cyclic phosphodiesterase 10A (1055 aa).

Disordered regions lie at residues 1–90 (MASL…RGGG), 151–193 (AAAA…GRRR), and 205–250 (LPAR…RPQG). 2 stretches are compositionally biased toward gly residues: residues 79 to 90 (GGPGALSARGGG) and 154 to 168 (AGGG…GGGQ). Residues 220–231 (PLGQAARRAGSP) show a composition bias toward low complexity. Residues 232 to 243 (GFPGAGPGGGGQ) are compositionally biased toward gly residues. Thr282 bears the Phosphothreonine mark. GAF domains are found at residues 367–510 (DNQL…SVAI) and 542–688 (AIDS…ALAL). Residues 562–563 (RC), 606–607 (IA), Thr640, Gln659, and His791 each bind 3',5'-cyclic AMP. One can recognise a PDEase domain in the interval 718–1035 (TSEEWQGLMQ…SQWEKVIRGE (318 aa)). His791 (proton donor) is an active-site residue. Position 791 (His791) interacts with 3',5'-cyclic GMP. A divalent metal cation contacts are provided by His795, His829, Asp830, and Asp940. Gln992 contacts 3',5'-cyclic AMP. Gln992 contributes to the 3',5'-cyclic GMP binding site.

The protein belongs to the cyclic nucleotide phosphodiesterase family. As to quaternary structure, homodimer. A divalent metal cation is required as a cofactor. Phosphorylated on Thr-16. In terms of tissue distribution, abundant in the putamen and caudate nucleus regions of brain and testis, moderately expressed in the thyroid gland, pituitary gland, thalamus and cerebellum.

It localises to the cytoplasm. Its subcellular location is the cytosol. It carries out the reaction a nucleoside 3',5'-cyclic phosphate + H2O = a nucleoside 5'-phosphate + H(+). The enzyme catalyses 3',5'-cyclic AMP + H2O = AMP + H(+). It catalyses the reaction 3',5'-cyclic GMP + H2O = GMP + H(+). It participates in purine metabolism; 3',5'-cyclic AMP degradation; AMP from 3',5'-cyclic AMP: step 1/1. It functions in the pathway purine metabolism; 3',5'-cyclic GMP degradation; GMP from 3',5'-cyclic GMP: step 1/1. Inhibited by dipyridamole and moderately by IBMX. cGMP acts as an allosteric activator. Its function is as follows. Plays a role in signal transduction by regulating the intracellular concentration of cyclic nucleotides. Can hydrolyze both cAMP and cGMP, but has higher affinity for cAMP and is more efficient with cAMP as substrate. May play a critical role in regulating cAMP and cGMP levels in the striatum, a region of the brain that contributes to the control of movement and cognition. This is cAMP and cAMP-inhibited cGMP 3',5'-cyclic phosphodiesterase 10A (PDE10A) from Homo sapiens (Human).